The sequence spans 342 residues: Trace amine-associated receptor 3 (342 aa).

Residues 1-35 (MDLIYIPEDLSSCPKFGNKSCPPTNRSFRVRLIMY) lie on the Extracellular side of the membrane. 2 N-linked (GlcNAc...) asparagine glycosylation sites follow: asparagine 18 and asparagine 25. Cystine bridges form between cysteine 21/cysteine 185 and cysteine 104/cysteine 189. The helical transmembrane segment at 36 to 56 (LLMTGAMVITIFGNLVIIISI) threads the bilayer. The Cytoplasmic segment spans residues 57 to 68 (SHFKQLHSPTNF). Residues 69 to 89 (LILSMATTDFLLGFVIMPYSM) form a helical membrane-spanning segment. Topologically, residues 90–150 (VRSVESCWYF…TTMTASMIKR (61 aa)) are extracellular. Residues 151-168 (LLFFCWAAPALFSFGLVL) traverse the membrane as a helical segment. The Cytoplasmic portion of the chain corresponds to 169 to 172 (SEAN). The segment at 173–186 (VSGMQSYEILIACF) is extracellular Loop 2 (ECL2). The helical transmembrane segment at 173-193 (VSGMQSYEILIACFNFCALTF) threads the bilayer. The Extracellular segment spans residues 194–198 (NKFWG). Residues 199 to 223 (TILFTTCFFTPGSIMVGIYGKIFIV) form a helical membrane-spanning segment. The Cytoplasmic portion of the chain corresponds to 224–256 (SRRHARALGNMPENTKGAGRNLSKKKDRKAAKT). A helical membrane pass occupies residues 257-277 (LGIVMGVFLACWLPCFLAVLI). Residues 278–286 (DPYLDYSTP) lie on the Extracellular side of the membrane. A helical membrane pass occupies residues 287–307 (IIVLDLLVWLGYFNSTCNPLI). Topologically, residues 308–342 (HGFFYPWFRKALEHIVSGKIFRSNSDTANLFPEAH) are cytoplasmic.

Belongs to the G-protein coupled receptor 1 family.

It localises to the cell membrane. Olfactory receptor activated by several primary trace amines, including isoamylamine. Activated by isoamylamine and cyclohexylamine, but not to the corresponding alcohols, isoamylalcohol and cyclohexanol. This receptor is probably mediated by the G(s)-class of G-proteins which activate adenylate cyclase. The protein is Trace amine-associated receptor 3 (Taar3) of Rattus norvegicus (Rat).